A 1017-amino-acid chain; its full sequence is Protein translocase subunit SecA 1 (1017 aa).

Residues glutamine 143, glycine 161–threonine 165, and aspartate 661 contribute to the ATP site. The interval glycine 978–arginine 999 is disordered. Zn(2+) is bound by residues cysteine 1003, cysteine 1005, cysteine 1014, and cysteine 1015.

The protein belongs to the SecA family. As to quaternary structure, monomer and homodimer. Part of the essential Sec protein translocation apparatus which comprises SecA, SecYEG and auxiliary proteins SecDF. Other proteins may also be involved. It depends on Zn(2+) as a cofactor.

The protein resides in the cell inner membrane. It localises to the cytoplasm. It catalyses the reaction ATP + H2O + cellular proteinSide 1 = ADP + phosphate + cellular proteinSide 2.. Functionally, part of the Sec protein translocase complex. Interacts with the SecYEG preprotein conducting channel. Has a central role in coupling the hydrolysis of ATP to the transfer of proteins into and across the cell membrane, serving as an ATP-driven molecular motor driving the stepwise translocation of polypeptide chains across the membrane. The chain is Protein translocase subunit SecA 1 from Chlorobium chlorochromatii (strain CaD3).